A 255-amino-acid chain; its full sequence is Ditrans,polycis-undecaprenyl-diphosphate synthase ((2E,6E)-farnesyl-diphosphate specific) (255 aa).

Asp-21 is an active-site residue. Residue Asp-21 participates in Mg(2+) binding. Substrate contacts are provided by residues 22-25 (GNGR), Trp-26, Arg-34, His-38, and 66-68 (SSE). Residue Asn-69 is the Proton acceptor of the active site. Substrate-binding positions include Trp-70, Arg-72, Arg-189, and 195–197 (RIS). Glu-208 lines the Mg(2+) pocket.

This sequence belongs to the UPP synthase family. In terms of assembly, homodimer. Mg(2+) is required as a cofactor.

It catalyses the reaction 8 isopentenyl diphosphate + (2E,6E)-farnesyl diphosphate = di-trans,octa-cis-undecaprenyl diphosphate + 8 diphosphate. Its function is as follows. Catalyzes the sequential condensation of isopentenyl diphosphate (IPP) with (2E,6E)-farnesyl diphosphate (E,E-FPP) to yield (2Z,6Z,10Z,14Z,18Z,22Z,26Z,30Z,34E,38E)-undecaprenyl diphosphate (di-trans,octa-cis-UPP). UPP is the precursor of glycosyl carrier lipid in the biosynthesis of bacterial cell wall polysaccharide components such as peptidoglycan and lipopolysaccharide. This chain is Ditrans,polycis-undecaprenyl-diphosphate synthase ((2E,6E)-farnesyl-diphosphate specific), found in Xylella fastidiosa (strain 9a5c).